The sequence spans 724 residues: 1,4-alpha-glucan branching enzyme GlgB 1 (724 aa).

The Nucleophile role is filled by D403. E456 functions as the Proton donor in the catalytic mechanism.

Belongs to the glycosyl hydrolase 13 family. GlgB subfamily. Monomer.

The enzyme catalyses Transfers a segment of a (1-&gt;4)-alpha-D-glucan chain to a primary hydroxy group in a similar glucan chain.. The protein operates within glycan biosynthesis; glycogen biosynthesis. In terms of biological role, catalyzes the formation of the alpha-1,6-glucosidic linkages in glycogen by scission of a 1,4-alpha-linked oligosaccharide from growing alpha-1,4-glucan chains and the subsequent attachment of the oligosaccharide to the alpha-1,6 position. The protein is 1,4-alpha-glucan branching enzyme GlgB 1 (glgB1) of Xanthomonas axonopodis pv. citri (strain 306).